The chain runs to 865 residues: Leucine--tRNA ligase (865 aa).

The 'HIGH' region motif lies at 58–68 (PYPSGNLHMGH). The short motif at 629 to 633 (KMSKS) is the 'KMSKS' region element. ATP is bound at residue lysine 632.

The protein belongs to the class-I aminoacyl-tRNA synthetase family.

The protein resides in the cytoplasm. It carries out the reaction tRNA(Leu) + L-leucine + ATP = L-leucyl-tRNA(Leu) + AMP + diphosphate. This is Leucine--tRNA ligase from Synechococcus sp. (strain ATCC 27144 / PCC 6301 / SAUG 1402/1) (Anacystis nidulans).